The chain runs to 161 residues: MAFDASFFALVGLVLFFVLIAYLKVPGMLSKSLDERAQNIQDELAEAKRLREEAQHLLAEYQRKRKEAEAEAAGIVAAAEREAAALTEEAKQKTEEFVARRTALSEQKIKQAEEDAIGAVRAAAVDIAIAASEKLLAEKTTAAAKAKLFAATIGEVKSKLN.

Residues 3 to 23 traverse the membrane as a helical segment; the sequence is FDASFFALVGLVLFFVLIAYL.

It belongs to the ATPase B chain family. As to quaternary structure, F-type ATPases have 2 components, F(1) - the catalytic core - and F(0) - the membrane proton channel. F(1) has five subunits: alpha(3), beta(3), gamma(1), delta(1), epsilon(1). F(0) has three main subunits: a(1), b(2) and c(10-14). The alpha and beta chains form an alternating ring which encloses part of the gamma chain. F(1) is attached to F(0) by a central stalk formed by the gamma and epsilon chains, while a peripheral stalk is formed by the delta and b chains.

Its subcellular location is the cell inner membrane. Functionally, f(1)F(0) ATP synthase produces ATP from ADP in the presence of a proton or sodium gradient. F-type ATPases consist of two structural domains, F(1) containing the extramembraneous catalytic core and F(0) containing the membrane proton channel, linked together by a central stalk and a peripheral stalk. During catalysis, ATP synthesis in the catalytic domain of F(1) is coupled via a rotary mechanism of the central stalk subunits to proton translocation. Its function is as follows. Component of the F(0) channel, it forms part of the peripheral stalk, linking F(1) to F(0). The sequence is that of ATP synthase subunit b 1 from Agrobacterium fabrum (strain C58 / ATCC 33970) (Agrobacterium tumefaciens (strain C58)).